The primary structure comprises 162 residues: Nucleotide-binding protein SCO4614 (162 aa).

It belongs to the YajQ family.

The protein localises to the cytoplasm. It localises to the nucleoid. Its function is as follows. Nucleotide-binding protein. The chain is Nucleotide-binding protein SCO4614 from Streptomyces coelicolor (strain ATCC BAA-471 / A3(2) / M145).